Consider the following 124-residue polypeptide: Small ribosomal subunit protein uS12 (124 aa).

A disordered region spans residues 1–24 (MPTINQLVRQGRKKSVKKTNTPAL). The residue at position 89 (aspartate 89) is a 3-methylthioaspartic acid.

Belongs to the universal ribosomal protein uS12 family. Part of the 30S ribosomal subunit. Contacts proteins S8 and S17. May interact with IF1 in the 30S initiation complex.

With S4 and S5 plays an important role in translational accuracy. Functionally, interacts with and stabilizes bases of the 16S rRNA that are involved in tRNA selection in the A site and with the mRNA backbone. Located at the interface of the 30S and 50S subunits, it traverses the body of the 30S subunit contacting proteins on the other side and probably holding the rRNA structure together. The combined cluster of proteins S8, S12 and S17 appears to hold together the shoulder and platform of the 30S subunit. The chain is Small ribosomal subunit protein uS12 from Desulfotalea psychrophila (strain LSv54 / DSM 12343).